Here is a 162-residue protein sequence, read N- to C-terminus: MLLGKRQRPPINRTTSLSEIKFDLNLPSESEPSNQQKPTVASPYGSNGQAVTAAVDQNRGFLDQRLLSMVTPRGNLRRHSGDFSDAGHFLRSCALCERLLVPGRDIYMYRGDKAFCSSECRQEQMAQDERKEKGKSAAPAKEPAVTAPARAKPGKGRAAAAV.

Disordered regions lie at residues 25–47 (NLPS…YGSN) and 121–162 (RQEQ…AAAV). The segment covering 27–47 (PSESEPSNQQKPTVASPYGSN) has biased composition (polar residues). The FLZ-type zinc finger occupies 88-132 (HFLRSCALCERLLVPGRDIYMYRGDKAFCSSECRQEQMAQDERKE). A compositionally biased stretch (low complexity) spans 147-162 (APARAKPGKGRAAAAV).

This sequence belongs to the FLZ family. Interacts with KIN10 and KIN11 via its FLZ-type zinc finger domain. In terms of tissue distribution, early expressed in hypocotyl and cotyledon. Later expressed in old or senescing leaves and in pistil, pollen and filament of open flowers.

It localises to the nucleus. The protein localises to the cytoplasm. Its subcellular location is the endoplasmic reticulum. Functionally, may act as an adapter to facilitate the interaction of SnRK1 complex with effector proteins, conferring tissue- and stimulus-type specific differences in the SnRK1 regulation pathway. Negatively regulates KIN10 leading to a repression of the SnRK1 signaling pathway. The chain is FCS-Like Zinc finger 6 from Arabidopsis thaliana (Mouse-ear cress).